A 562-amino-acid chain; its full sequence is MNINVADLLNGNYILLLFVVLSLGLCLGKLRLGPVQLGNSIGVLVVSLLLGQQHFSINTEALSLGFMLFIFCVGVEAGPNFFSIFFRDGKNYFMLALVMVGSAMLLALGLGKLFGWGIGLTAGMLAGSMTSTPVLVGAGDTLRNTASLGGQLGVEQDHLSLGYALTYLVGLVSLIFGARYLPKLQHQDLPTSAQQIARERGLDVDSQRKVYLPVIRAYRVGPELVDWAAGKNLRELGIYRQTGCYIERIRRNGILANPDGDAVLQIGDEIALVGYPDAHSRLNSNFRDGKEVFDRNLLDMRIVTEEIVVKNHNAVGKRLSQLKLTDHGCFLNRIVRSQIEMPLDDNVVLNKGDVLQVSGDARRVKSIAERIGFISIHSQVTDLLAFCAFFVIGVMVGLITIQFSNFTFGIGNAAGLLFAGIMLGFLRANHPTFGYIPQGALNMVKEFGLMVFMAGVGLSAGSTINSSLGEVGIQMLASGLIVSLVPVVICFLFGAYVLKMNRALLFGAMMGARTCAPAMEIISDTARSNIPALGYAGTYAIANVLLTLAGSLIVVIWPELPG.

Transmembrane regions (helical) follow at residues 8 to 28, 32 to 52, 66 to 86, 93 to 113, 116 to 136, and 158 to 178; these read LLNG…LCLG, LGPV…LLGQ, FMLF…SIFF, FMLA…LGKL, WGIG…PVLV, and HLSL…IFGA. RCK C-terminal domains are found at residues 202 to 288 and 290 to 373; these read LDVD…NFRD and KEVF…RIGF. A run of 5 helical transmembrane segments spans residues 383–403, 406–426, 447–467, 478–498, and 537–557; these read LLAF…TIQF, FTFG…LGFL, FGLM…INSS, SGLI…AYVL, and GTYA…VVIW.

The protein belongs to the AAE transporter (TC 2.A.81) family. YbjL subfamily.

The protein localises to the cell membrane. The sequence is that of Putative transport protein ECA2683 from Pectobacterium atrosepticum (strain SCRI 1043 / ATCC BAA-672) (Erwinia carotovora subsp. atroseptica).